We begin with the raw amino-acid sequence, 189 residues long: Elongation factor P (189 aa).

Lysine 34 carries the post-translational modification N6-(3,6-diaminohexanoyl)-5-hydroxylysine.

It belongs to the elongation factor P family. Post-translationally, may be beta-lysylated on the epsilon-amino group of Lys-34 by the combined action of EpmA and EpmB, and then hydroxylated on the C5 position of the same residue by EpmC (if this protein is present). Lysylation is critical for the stimulatory effect of EF-P on peptide-bond formation. The lysylation moiety may extend toward the peptidyltransferase center and stabilize the terminal 3-CCA end of the tRNA. Hydroxylation of the C5 position on Lys-34 may allow additional potential stabilizing hydrogen-bond interactions with the P-tRNA.

Its subcellular location is the cytoplasm. It functions in the pathway protein biosynthesis; polypeptide chain elongation. Its function is as follows. Involved in peptide bond synthesis. Alleviates ribosome stalling that occurs when 3 or more consecutive Pro residues or the sequence PPG is present in a protein, possibly by augmenting the peptidyl transferase activity of the ribosome. Modification of Lys-34 is required for alleviation. This is Elongation factor P from Saccharophagus degradans (strain 2-40 / ATCC 43961 / DSM 17024).